Consider the following 376-residue polypeptide: Endo-1,4-beta-xylanase A (376 aa).

The first 18 residues, 1–18, serve as a signal peptide directing secretion; that stretch reads MHLASSLFLLATLPFGFA. One can recognise a GH10 domain in the interval 55 to 355; sequence QRERAGLEDK…HPAYYGVVEA (301 aa). Asn-100 carries N-linked (GlcNAc...) asparagine glycosylation. Glu-170 (proton donor) is an active-site residue. Glu-277 serves as the catalytic Nucleophile. Asn-358 is a glycosylation site (N-linked (GlcNAc...) asparagine).

The protein belongs to the glycosyl hydrolase 10 (cellulase F) family.

Its subcellular location is the secreted. It catalyses the reaction Endohydrolysis of (1-&gt;4)-beta-D-xylosidic linkages in xylans.. It participates in glycan degradation; xylan degradation. With respect to regulation, partial inhibition of activity is detected in the presence of Ag(+), Cu2(+) and SDS. Like most fungal xylanases, activity is completely inhibited by Hg(2+) since Hg(2+) could interact with tryptophan residues and oxidize the indole ring. Beta-mercaptoethanol enhances the enzymatic activity by counteracting the oxidation effects of the S-S linkage between cysteine residues. Its function is as follows. Endo-1,4-beta-xylanase involved in the hydrolysis of xylan, a major structural heterogeneous polysaccharide found in plant biomass representing the second most abundant polysaccharide in the biosphere, after cellulose. Is most active on birchwood xylan (defined as 100%), moderate on beechwood xylan (96.8%) and soluble wheat arabinoxylan (84.5%), and weak on insoluble wheat arabinoxylan (19.7%). Hydrolyzes substrates into a mixture of xylobiose and xylotriose, but no xylose. No activity was detected in the presence of barley beta-glucan, carboxymethyl cellulose-sodium (CMC-Na), and Avicel. Acts as an alkali-tolerant xylanase, exhibiting 68.8% of the activity at pH 9.0, and even 31.8% at pH 10.0. This Humicola insolens (Soft-rot fungus) protein is Endo-1,4-beta-xylanase A.